Here is a 121-residue protein sequence, read N- to C-terminus: RxLR effector protein PexRD2 (121 aa).

The signal sequence occupies residues 1 to 18 (MRLSYVFVVFAASLLVTA). The short motif at 38–56 (RLLRKHYTAAENDGDSEAR) is the RxLR-dEER element. A WY domain region spans residues 57–121 (ALNPEKMKTM…LNYVAEHTAV (65 aa)).

Belongs to the RxLR effector family.

The protein localises to the secreted. It is found in the host cytoplasm. It localises to the host nucleus. Functionally, secreted effector involved in P.mirabilis colonization of host plants. May perturb the signaling of cell death associated with plant immunity, via interaction with a host MAP kinase. This Phytophthora mirabilis protein is RxLR effector protein PexRD2.